Reading from the N-terminus, the 627-residue chain is 1-deoxy-D-xylulose-5-phosphate synthase (627 aa).

Residues H80 and 121–123 (GHS) contribute to the thiamine diphosphate site. D152 is a Mg(2+) binding site. Thiamine diphosphate contacts are provided by residues 153–154 (GA), N181, Y288, and E370. N181 provides a ligand contact to Mg(2+).

The protein belongs to the transketolase family. DXPS subfamily. In terms of assembly, homodimer. The cofactor is Mg(2+). Thiamine diphosphate is required as a cofactor.

The catalysed reaction is D-glyceraldehyde 3-phosphate + pyruvate + H(+) = 1-deoxy-D-xylulose 5-phosphate + CO2. It participates in metabolic intermediate biosynthesis; 1-deoxy-D-xylulose 5-phosphate biosynthesis; 1-deoxy-D-xylulose 5-phosphate from D-glyceraldehyde 3-phosphate and pyruvate: step 1/1. Catalyzes the acyloin condensation reaction between C atoms 2 and 3 of pyruvate and glyceraldehyde 3-phosphate to yield 1-deoxy-D-xylulose-5-phosphate (DXP). The protein is 1-deoxy-D-xylulose-5-phosphate synthase of Aliivibrio fischeri (strain MJ11) (Vibrio fischeri).